A 166-amino-acid polypeptide reads, in one-letter code: Small ribosomal subunit protein uS5 (166 aa).

The region spanning 11 to 74 (LQEKLIAVNR…EKARRNMINV (64 aa)) is the S5 DRBM domain.

The protein belongs to the universal ribosomal protein uS5 family. In terms of assembly, part of the 30S ribosomal subunit. Contacts proteins S4 and S8.

With S4 and S12 plays an important role in translational accuracy. In terms of biological role, located at the back of the 30S subunit body where it stabilizes the conformation of the head with respect to the body. The sequence is that of Small ribosomal subunit protein uS5 from Mannheimia succiniciproducens (strain KCTC 0769BP / MBEL55E).